A 283-amino-acid chain; its full sequence is ATP phosphoribosyltransferase (283 aa).

This sequence belongs to the ATP phosphoribosyltransferase family. Long subfamily. Mg(2+) is required as a cofactor.

The protein resides in the cytoplasm. The enzyme catalyses 1-(5-phospho-beta-D-ribosyl)-ATP + diphosphate = 5-phospho-alpha-D-ribose 1-diphosphate + ATP. Its pathway is amino-acid biosynthesis; L-histidine biosynthesis; L-histidine from 5-phospho-alpha-D-ribose 1-diphosphate: step 1/9. Its activity is regulated as follows. Feedback inhibited by histidine. In terms of biological role, catalyzes the condensation of ATP and 5-phosphoribose 1-diphosphate to form N'-(5'-phosphoribosyl)-ATP (PR-ATP). Has a crucial role in the pathway because the rate of histidine biosynthesis seems to be controlled primarily by regulation of HisG enzymatic activity. In Azobacteroides pseudotrichonymphae genomovar. CFP2, this protein is ATP phosphoribosyltransferase.